An 86-amino-acid polypeptide reads, in one-letter code: MIPAVVLLLLLLVEQAAALGEPQLCYILDAILFLYGIVLTLLYCRLKLQVRKAAIDSYEKSDGVYTGLSTRNQETYETLKHEKPPQ.

Residues Met-1 to Ala-18 form the signal peptide. Over Leu-19–Gln-23 the chain is Extracellular. The helical transmembrane segment at Leu-24–Cys-44 threads the bilayer. Residues Arg-45–Gln-86 lie on the Cytoplasmic side of the membrane. The ITAM domain maps to Ala-54 to Glu-82. Residue Tyr-65 is modified to Phosphotyrosine. Ser-69 is modified (phosphoserine). Tyr-76 carries the post-translational modification Phosphotyrosine. The residue at position 78 (Thr-78) is a Phosphothreonine.

It belongs to the CD3Z/FCER1G family. IgE Fc receptor is a tetramer of an alpha chain, a beta chain, and two disulfide linked gamma chains. Associates with FCGR1A; forms a functional signaling complex. The signaling subunit of immunoglobulin gamma (IgG) Fc receptor complex. As a homodimer or a heterodimer of CD247 and FCER1G, associates with the ligand binding subunit FCGR3A to form a functional receptor complex. Associates with CLEC6A. Interacts with CLEC4E. Interacts (via ITAM domain) with SYK (via SH2 domains); activates SYK, enabling integrin-mediated activation of neutrophils and macrophages. Interacts with common beta chain of interleukin 3 receptor CSF2RB and recruits SYK in response to IL3 stimulation; this interaction is direct. Interacts with CD300LH; the interaction may be indirect. Interacts with CD300LD. Interacts with TARM1.

It localises to the cell membrane. Adapter protein containing an immunoreceptor tyrosine-based activation motif (ITAM) that transduces activation signals from various immunoreceptors. As a component of the high-affinity immunoglobulin E (IgE) receptor, mediates allergic inflammatory signaling in mast cells. As a constitutive component of interleukin-3 receptor complex, selectively mediates interleukin 4/IL4 production b basophils priming T-cells toward effector T-helper 2 subset. Associates with pattern recognition receptors CLEC4D and CLEC4E to form a functional signaling complex in myeloid cells. Binding of mycobacterial trehalose 6,6'-dimycolate (TDM) to this receptor complex leads to phosphorylation of ITAM, triggering activation of SYK, CARD9 and NF-kappa-B, consequently driving maturation of antigen-presenting cells and shaping antigen-specific priming of T-cells toward effector T-helper 1 and T-helper 17 cell subtypes. May function cooperatively with other activating receptors. Functionally linked to integrin beta-2/ITGB2-mediated neutrophil activation. Also involved in integrin alpha-2/ITGA2-mediated platelet activation. This chain is High affinity immunoglobulin epsilon receptor subunit gamma (FCER1G), found in Sus scrofa (Pig).